Here is a 107-residue protein sequence, read N- to C-terminus: QQVAAGAVSFRKCTPCHNIGEGATNKVGPVLDGLEGRHSGSIPGFNYSEANKKSGLTWDKATFKSYIADPRAKIPGTKMVFAGIKNEKEQEDLWAFLTQYGPDGKKK.

Gln-1 bears the Pyrrolidone carboxylic acid mark. Positions 13, 16, 17, and 79 each coordinate heme c.

The protein belongs to the cytochrome c family. In terms of processing, binds 1 heme c group covalently per subunit.

It is found in the periplasm. Functionally, cytochrome c2 is found mainly in purple, non-sulfur, photosynthetic bacteria where it functions as the electron donor to the oxidized bacteriochlorophyll in the photophosphorylation pathway. However, it may also have a role in the respiratory chain and is found in some non-photosynthetic bacteria. This Rhodoplanes tepidamans (Rhodoplanes cryptolactis) protein is Cytochrome c2.